The following is a 619-amino-acid chain: Dihydroxy-acid dehydratase (619 aa).

Aspartate 81 is a binding site for Mg(2+). [2Fe-2S] cluster is bound at residue cysteine 122. Mg(2+) contacts are provided by aspartate 123 and lysine 124. Lysine 124 is modified (N6-carboxylysine). A [2Fe-2S] cluster-binding site is contributed by cysteine 195. Glutamate 494 contributes to the Mg(2+) binding site. The active-site Proton acceptor is the serine 520.

This sequence belongs to the IlvD/Edd family. Homodimer. [2Fe-2S] cluster is required as a cofactor. Requires Mg(2+) as cofactor.

It catalyses the reaction (2R)-2,3-dihydroxy-3-methylbutanoate = 3-methyl-2-oxobutanoate + H2O. It carries out the reaction (2R,3R)-2,3-dihydroxy-3-methylpentanoate = (S)-3-methyl-2-oxopentanoate + H2O. It participates in amino-acid biosynthesis; L-isoleucine biosynthesis; L-isoleucine from 2-oxobutanoate: step 3/4. It functions in the pathway amino-acid biosynthesis; L-valine biosynthesis; L-valine from pyruvate: step 3/4. In terms of biological role, functions in the biosynthesis of branched-chain amino acids. Catalyzes the dehydration of (2R,3R)-2,3-dihydroxy-3-methylpentanoate (2,3-dihydroxy-3-methylvalerate) into 2-oxo-3-methylpentanoate (2-oxo-3-methylvalerate) and of (2R)-2,3-dihydroxy-3-methylbutanoate (2,3-dihydroxyisovalerate) into 2-oxo-3-methylbutanoate (2-oxoisovalerate), the penultimate precursor to L-isoleucine and L-valine, respectively. The sequence is that of Dihydroxy-acid dehydratase from Shewanella frigidimarina (strain NCIMB 400).